Reading from the N-terminus, the 338-residue chain is DNA-directed RNA polymerase subunit alpha (338 aa).

Residues 1–233 (MLREEVAVST…DLFIPFLHAE (233 aa)) are alpha N-terminal domain (alpha-NTD). An alpha C-terminal domain (alpha-CTD) region spans residues 266 to 338 (IALKFIFIDQ…IDLPKNKFSN (73 aa)).

This sequence belongs to the RNA polymerase alpha chain family. In terms of assembly, in plastids the minimal PEP RNA polymerase catalytic core is composed of four subunits: alpha, beta, beta', and beta''. When a (nuclear-encoded) sigma factor is associated with the core the holoenzyme is formed, which can initiate transcription.

Its subcellular location is the plastid. It localises to the chloroplast. It catalyses the reaction RNA(n) + a ribonucleoside 5'-triphosphate = RNA(n+1) + diphosphate. In terms of biological role, DNA-dependent RNA polymerase catalyzes the transcription of DNA into RNA using the four ribonucleoside triphosphates as substrates. The chain is DNA-directed RNA polymerase subunit alpha from Nandina domestica (Heavenly bamboo).